The following is a 114-amino-acid chain: UPF0342 protein SERP1381 (114 aa).

It belongs to the UPF0342 family.

In Staphylococcus epidermidis (strain ATCC 35984 / DSM 28319 / BCRC 17069 / CCUG 31568 / BM 3577 / RP62A), this protein is UPF0342 protein SERP1381.